The chain runs to 102 residues: Putative pterin-4-alpha-carbinolamine dehydratase (102 aa).

Belongs to the pterin-4-alpha-carbinolamine dehydratase family.

It catalyses the reaction (4aS,6R)-4a-hydroxy-L-erythro-5,6,7,8-tetrahydrobiopterin = (6R)-L-erythro-6,7-dihydrobiopterin + H2O. The chain is Putative pterin-4-alpha-carbinolamine dehydratase from Burkholderia lata (strain ATCC 17760 / DSM 23089 / LMG 22485 / NCIMB 9086 / R18194 / 383).